The sequence spans 407 residues: Na(+)-translocating NADH-quinone reductase subunit F (407 aa).

A helical transmembrane segment spans residues 3–23 (IILGVVMFTLIVLALVLVILF). The 2Fe-2S ferredoxin-type domain maps to 32-126 (GDITISINGD…DMDIELPEEI (95 aa)). The [2Fe-2S] cluster site is built by cysteine 69, cysteine 75, cysteine 78, and cysteine 110. Positions 129 to 269 (VKKWECTVIS…SGPFGEFFAK (141 aa)) constitute an FAD-binding FR-type domain. The segment at 272–389 (DAEMVFIGGG…PMMNAAVIGM (118 aa)) is catalytic.

This sequence belongs to the NqrF family. As to quaternary structure, composed of six subunits; NqrA, NqrB, NqrC, NqrD, NqrE and NqrF. The cofactor is [2Fe-2S] cluster. FAD is required as a cofactor.

The protein resides in the cell inner membrane. It catalyses the reaction a ubiquinone + n Na(+)(in) + NADH + H(+) = a ubiquinol + n Na(+)(out) + NAD(+). NQR complex catalyzes the reduction of ubiquinone-1 to ubiquinol by two successive reactions, coupled with the transport of Na(+) ions from the cytoplasm to the periplasm. The first step is catalyzed by NqrF, which accepts electrons from NADH and reduces ubiquinone-1 to ubisemiquinone by a one-electron transfer pathway. The protein is Na(+)-translocating NADH-quinone reductase subunit F of Vibrio vulnificus (strain CMCP6).